Reading from the N-terminus, the 329-residue chain is Minor capsid protein A1 (329 aa).

The protein resides in the virion. Its function is as follows. Minor capsid protein. The protein is Minor capsid protein A1 of Escherichia coli (Bacteriophage Q-beta).